The sequence spans 337 residues: MEGKNQTNISEFLLLGFSSWQQQQVLLFALFLCLYLTGLFGNLLILLAIGSDHCLHTPMYFFLANLSLVDLCLPSATVPKMLLNIQTQTQTISYPGCLAQMYFCMMFANMDNFLLTVMAYDRYVAICHPLHYSTIMALRLCASLVAAPWVIAILNPLLHTLMMAHLHFCSDNVIHHFFCDINSLLPLSCSDTSLNQLSVLATVGLIFVVPSVCILVSYILIVSAVMKVPSAQGKLKAFSTCGSHLALVILFYGAITGVYMSPLSNHSTEKDSAASVIFMVVAPVLNPFIYSLRNNELKGTLKKTLSRPGAVAHACNPSTLGGRGGWIMRSGDRDHPG.

Residues 1 to 25 (MEGKNQTNISEFLLLGFSSWQQQQV) are Extracellular-facing. 2 N-linked (GlcNAc...) asparagine glycosylation sites follow: N5 and N8. The helical transmembrane segment at 26-49 (LLFALFLCLYLTGLFGNLLILLAI) threads the bilayer. Residues 50–57 (GSDHCLHT) lie on the Cytoplasmic side of the membrane. A helical transmembrane segment spans residues 58–79 (PMYFFLANLSLVDLCLPSATVP). Topologically, residues 80 to 100 (KMLLNIQTQTQTISYPGCLAQ) are extracellular. The cysteines at positions 97 and 189 are disulfide-linked. A helical transmembrane segment spans residues 101–120 (MYFCMMFANMDNFLLTVMAY). The Cytoplasmic segment spans residues 121 to 139 (DRYVAICHPLHYSTIMALR). The helical transmembrane segment at 140–158 (LCASLVAAPWVIAILNPLL) threads the bilayer. At 159–196 (HTLMMAHLHFCSDNVIHHFFCDINSLLPLSCSDTSLNQ) the chain is on the extracellular side. A helical transmembrane segment spans residues 197–219 (LSVLATVGLIFVVPSVCILVSYI). Over 220–236 (LIVSAVMKVPSAQGKLK) the chain is Cytoplasmic. A helical membrane pass occupies residues 237–259 (AFSTCGSHLALVILFYGAITGVY). The Extracellular segment spans residues 260–272 (MSPLSNHSTEKDS). N-linked (GlcNAc...) asparagine glycosylation occurs at N265. A helical membrane pass occupies residues 273–292 (AASVIFMVVAPVLNPFIYSL). The Cytoplasmic segment spans residues 293 to 337 (RNNELKGTLKKTLSRPGAVAHACNPSTLGGRGGWIMRSGDRDHPG).

It belongs to the G-protein coupled receptor 1 family.

The protein localises to the cell membrane. Functionally, odorant receptor. This Homo sapiens (Human) protein is Putative olfactory receptor 1F12P.